The sequence spans 362 residues: Histidinol-phosphate aminotransferase 1 (362 aa).

Lys-226 is modified (N6-(pyridoxal phosphate)lysine).

Belongs to the class-II pyridoxal-phosphate-dependent aminotransferase family. Histidinol-phosphate aminotransferase subfamily. Homodimer. The cofactor is pyridoxal 5'-phosphate.

The enzyme catalyses L-histidinol phosphate + 2-oxoglutarate = 3-(imidazol-4-yl)-2-oxopropyl phosphate + L-glutamate. The protein operates within amino-acid biosynthesis; L-histidine biosynthesis; L-histidine from 5-phospho-alpha-D-ribose 1-diphosphate: step 7/9. This Dechloromonas aromatica (strain RCB) protein is Histidinol-phosphate aminotransferase 1.